A 482-amino-acid chain; its full sequence is Pup--protein ligase (482 aa).

Glutamate 16 serves as a coordination point for Mg(2+). Arginine 60 contacts ATP. Position 62 (tyrosine 62) interacts with Mg(2+). Aspartate 64 serves as the catalytic Proton acceptor. Residue glutamate 70 coordinates Mg(2+). Residues threonine 73 and tryptophan 440 each contribute to the ATP site.

This sequence belongs to the Pup ligase/Pup deamidase family. Pup-conjugating enzyme subfamily.

It carries out the reaction ATP + [prokaryotic ubiquitin-like protein]-L-glutamate + [protein]-L-lysine = ADP + phosphate + N(6)-([prokaryotic ubiquitin-like protein]-gamma-L-glutamyl)-[protein]-L-lysine.. The protein operates within protein degradation; proteasomal Pup-dependent pathway. It participates in protein modification; protein pupylation. In terms of biological role, catalyzes the covalent attachment of the prokaryotic ubiquitin-like protein modifier Pup to the proteasomal substrate proteins, thereby targeting them for proteasomal degradation. This tagging system is termed pupylation. The ligation reaction involves the side-chain carboxylate of the C-terminal glutamate of Pup and the side-chain amino group of a substrate lysine. This chain is Pup--protein ligase, found in Corynebacterium glutamicum (strain R).